We begin with the raw amino-acid sequence, 908 residues long: Flap endonuclease GEN homolog 1 (908 aa).

Residues 2-96 (GVNDLWQILE…SKRNQSRYGS (95 aa)) form an XPG-N domain region. Mg(2+) contacts are provided by Asp30, Glu75, Glu134, Glu136, Asp155, Asp157, and Asp208. Residues 122–208 (ECLGIPWVQA…VGLAILLGCD (87 aa)) form an XPG-I domain region. Positions 208-384 (DYLPKGVPGV…LLVLLTHYDM (177 aa)) are 5'-3' exonuclease domain. The chromodomain stretch occupies residues 390-464 (GSRNSNQLQP…VYQKQKLEIK (75 aa)). Residues Ser801 and Ser802 each carry the phosphoserine modification.

The protein belongs to the XPG/RAD2 endonuclease family. GEN subfamily. In terms of assembly, largely monomeric, dimerizes on the Holliday junction and the first nick occurs upon dimerization at the junction. Mg(2+) serves as cofactor.

The protein localises to the nucleus. Endonuclease which resolves Holliday junctions (HJs) by the introduction of symmetrically related cuts across the junction point, to produce nicked duplex products in which the nicks can be readily ligated. Four-way DNA intermediates, also known as Holliday junctions, are formed during homologous recombination and DNA repair, and their resolution is necessary for proper chromosome segregation. Cleaves HJs by a nick and counter-nick mechanism involving dual coordinated incisions that lead to the formation of ligatable nicked duplex products. Cleavage of the first strand is rate limiting, while second strand cleavage is rapid. Largely monomeric, dimerizes on the HJ and the first nick occurs upon dimerization at the junction. Efficiently cleaves both single and double HJs contained within large recombination intermediates. Exhibits a weak sequence preference for incision between two G residues that reside in a T-rich region of DNA. Also has endonuclease activity on 5'-flap and replication fork (RF) DNA substrates. This Homo sapiens (Human) protein is Flap endonuclease GEN homolog 1 (GEN1).